Here is a 1438-residue protein sequence, read N- to C-terminus: Membrane-anchored lipid-binding protein YSP2 (1438 aa).

A compositionally biased stretch (basic and acidic residues) spans 1–17; the sequence is MRDEATRKKRSFSDGHF. Disordered regions lie at residues 1–97, 174–194, 200–219, 285–308, 338–418, 455–485, and 505–543; these read MRDE…SHTP, KVKH…NERP, QKDD…SAPN, QQQH…QNPN, TSGP…KVKF, DENN…LGPK, and SQSN…RYSS. Topologically, residues 1-1277 are cytoplasmic; the sequence is MRDEATRKKR…SAFSMLQQVN (1277 aa). Ser13 is modified (phosphoserine). Residues 18–29 are compositionally biased toward basic residues; the sequence is FKKLKLMSRKKQ. A compositionally biased stretch (basic and acidic residues) spans 30–44; the sequence is PVMERSKTTRTRKES. A compositionally biased stretch (low complexity) spans 45–58; the sequence is TNSAAKSSLSLRRA. Residues 74 to 97 are compositionally biased toward polar residues; the sequence is IGSTNEGVAGNSGSNSPAQYSHTP. Composition is skewed to low complexity over residues 286–298 and 374–398; these read QQHP…GPLP and PTNT…ANSN. Phosphoserine is present on Ser411. Residues 455–470 are compositionally biased toward low complexity; that stretch reads DENNTNNNPNASSTNL. Over residues 471–485 the composition is skewed to polar residues; the sequence is SHISKSNVNNNLGPK. Ser596 is modified (phosphoserine). Positions 648 to 716 constitute a GRAM domain; the sequence is EFHTLFKDCD…KEIVQIEKKT (69 aa). Residues 777–843 are disordered; the sequence is SSSAFFDDSD…LGPNKHSPTT (67 aa). A compositionally biased stretch (acidic residues) spans 783–800; the sequence is DDSDDNDDDGDLDDDDPD. A compositionally biased stretch (polar residues) spans 818–832; it reads NESNDLGKNQKSTNY. Residues 851-1018 enclose the VASt 1 domain; it reads NDHLVIEANI…EIKKILSDED (168 aa). At Ser1032 the chain carries Phosphoserine. The VASt 2 domain occupies 1059-1225; it reads DDTVIDEKIN…DLKKIISNAS (167 aa). The tract at residues 1225–1257 is disordered; it reads SSTKKKSRRRGKTVNKRKSSPSTIKNEKNEENF. The span at 1227–1243 shows a compositional bias: basic residues; that stretch reads TKKKSRRRGKTVNKRKS. Residues 1278–1298 traverse the membrane as a helical segment; the sequence is ITSVQGIMTIISFFICLIFFF. Over 1299–1438 the chain is Lumenal; it reads RLLFHSKNTS…DNTSATNQLL (140 aa). Residues Asn1306, Asn1373, and Asn1430 are each glycosylated (N-linked (GlcNAc...) asparagine).

The protein belongs to the YSP2 family.

Its subcellular location is the mitochondrion membrane. The protein localises to the endoplasmic reticulum membrane. In terms of biological role, involved in induction of programmed cell death in response to reactive oxygen species (ROS). May be involved in sterol transfer between intracellular membranes. This is Membrane-anchored lipid-binding protein YSP2 from Saccharomyces cerevisiae (strain ATCC 204508 / S288c) (Baker's yeast).